Reading from the N-terminus, the 199-residue chain is Golgi to ER traffic protein 1 (199 aa).

Residues Met-1–Ile-11 are Lumenal-facing. Residues Leu-12 to Ser-31 form a helical membrane-spanning segment. Over Thr-32–Ile-115 the chain is Cytoplasmic. Positions Tyr-76–Leu-116 form a coiled coil. The helical transmembrane segment at Leu-116 to Phe-136 threads the bilayer. At Tyr-137–Ala-160 the chain is on the lumenal side. A helical transmembrane segment spans residues Val-161 to Phe-177. The Cytoplasmic segment spans residues Ser-178–Glu-199.

Belongs to the WRB/GET1 family. In terms of assembly, component of the Golgi to ER traffic (GET) complex, which is composed of GET1, GET2 and GET3. Within the complex, GET1 and GET2 form a heterotetramer which is stabilized by phosphatidylinositol binding and which binds to the GET3 homodimer.

The protein localises to the endoplasmic reticulum membrane. It localises to the golgi apparatus membrane. In terms of biological role, required for the post-translational delivery of tail-anchored (TA) proteins to the endoplasmic reticulum. Together with GET2, acts as a membrane receptor for soluble GET3, which recognizes and selectively binds the transmembrane domain of TA proteins in the cytosol. The GET complex cooperates with the HDEL receptor ERD2 to mediate the ATP-dependent retrieval of resident ER proteins that contain a C-terminal H-D-E-L retention signal from the Golgi to the ER. The protein is Golgi to ER traffic protein 1 of Candida albicans (strain SC5314 / ATCC MYA-2876) (Yeast).